The sequence spans 348 residues: Protein RecA (348 aa).

64–71 contacts ATP; the sequence is GPESSGKT. Residues 325-335 show a composition bias toward basic and acidic residues; sequence YEIDGSNKEPL. Residues 325–348 form a disordered region; sequence YEIDGSNKEPLDEGEETLSLLDDE. The segment covering 336–348 has biased composition (acidic residues); that stretch reads DEGEETLSLLDDE.

Belongs to the RecA family.

The protein resides in the cytoplasm. Its function is as follows. Can catalyze the hydrolysis of ATP in the presence of single-stranded DNA, the ATP-dependent uptake of single-stranded DNA by duplex DNA, and the ATP-dependent hybridization of homologous single-stranded DNAs. It interacts with LexA causing its activation and leading to its autocatalytic cleavage. The sequence is that of Protein RecA from Listeria monocytogenes serotype 4b (strain CLIP80459).